The following is a 344-amino-acid chain: Methionine import ATP-binding protein MetN (344 aa).

The region spanning 2–241 (IELQGLSQRF…PQHEVTRAMI (240 aa)) is the ABC transporter domain. 38–45 (GRSGAGKS) lines the ATP pocket.

This sequence belongs to the ABC transporter superfamily. Methionine importer (TC 3.A.1.24) family. The complex is composed of two ATP-binding proteins (MetN), two transmembrane proteins (MetI) and a solute-binding protein (MetQ).

It localises to the cell inner membrane. The enzyme catalyses L-methionine(out) + ATP + H2O = L-methionine(in) + ADP + phosphate + H(+). It catalyses the reaction D-methionine(out) + ATP + H2O = D-methionine(in) + ADP + phosphate + H(+). In terms of biological role, part of the ABC transporter complex MetNIQ involved in methionine import. Responsible for energy coupling to the transport system. This chain is Methionine import ATP-binding protein MetN, found in Cupriavidus metallidurans (strain ATCC 43123 / DSM 2839 / NBRC 102507 / CH34) (Ralstonia metallidurans).